The following is a 312-amino-acid chain: Pre-mRNA-splicing factor 38A (312 aa).

Positions 1–179 (MANRTVKDAH…VLEETEQLDP (179 aa)) are N-terminal protein interaction domain. Residues 180–312 (RVSALEEDMD…SHKKSRRGNE (133 aa)) form a disordered region. Residues 184 to 201 (LEEDMDDVESSEEEEDDD) show a composition bias toward acidic residues. A compositionally biased stretch (basic and acidic residues) spans 202–223 (EKGRDPSPEHHRRNYRDLDRPR). Composition is skewed to basic residues over residues 224 to 294 (RSPS…RSHS) and 301 to 312 (KKSHKKSRRGNE).

It belongs to the PRP38 family. As to quaternary structure, component of the spliceosome B complex.

Its subcellular location is the nucleus. Involved in pre-mRNA splicing as a component of the spliceosome. In Xenopus laevis (African clawed frog), this protein is Pre-mRNA-splicing factor 38A (prpf38a).